The primary structure comprises 253 residues: 5'/3'-nucleotidase SurE (253 aa).

Aspartate 8, aspartate 9, serine 39, and asparagine 92 together coordinate a divalent metal cation.

Belongs to the SurE nucleotidase family. A divalent metal cation is required as a cofactor.

Its subcellular location is the cytoplasm. The catalysed reaction is a ribonucleoside 5'-phosphate + H2O = a ribonucleoside + phosphate. It carries out the reaction a ribonucleoside 3'-phosphate + H2O = a ribonucleoside + phosphate. It catalyses the reaction [phosphate](n) + H2O = [phosphate](n-1) + phosphate + H(+). Functionally, nucleotidase with a broad substrate specificity as it can dephosphorylate various ribo- and deoxyribonucleoside 5'-monophosphates and ribonucleoside 3'-monophosphates with highest affinity to 3'-AMP. Also hydrolyzes polyphosphate (exopolyphosphatase activity) with the preference for short-chain-length substrates (P20-25). Might be involved in the regulation of dNTP and NTP pools, and in the turnover of 3'-mononucleotides produced by numerous intracellular RNases (T1, T2, and F) during the degradation of various RNAs. This is 5'/3'-nucleotidase SurE from Salmonella arizonae (strain ATCC BAA-731 / CDC346-86 / RSK2980).